A 795-amino-acid polypeptide reads, in one-letter code: Histone acetyltransferase KAT2A (795 aa).

The segment covering 1 to 18 has biased composition (polar residues); that stretch reads MADPAAQSSAQPRLQQAQ. The segment at 1–55 is disordered; it reads MADPAAQSSAQPRLQQAQSSGPTGSNSNPGAGSSDPARPGLSQQQWSSQKKAQVR. Residues 19–34 are compositionally biased toward low complexity; sequence SSGPTGSNSNPGAGSS. The N-acetyltransferase domain maps to 461–614; that stretch reads VIGNSLSQKS…GATLMECELN (154 aa). Residue Glu-533 is the Proton donor/acceptor of the active site. Residues 537-539, 544-550, and Tyr-575 contribute to the acetyl-CoA site; these read CAV and QVKGYGT. Residues 537-539, 544-550, and Tyr-575 each bind succinyl-CoA; these read CAV and QVKGYGT. Residues 597–606 form a loop 3 region; that stretch reads LGYIKDYEGA. A Bromo domain is found at 686–790; the sequence is KDPDLLYNML…KFFYFKLKEA (105 aa).

The protein belongs to the acetyltransferase family. GCN5 subfamily.

The protein localises to the nucleus. It localises to the chromosome. It is found in the cytoplasm. Its subcellular location is the cytoskeleton. The protein resides in the microtubule organizing center. The protein localises to the centrosome. It carries out the reaction L-lysyl-[histone] + acetyl-CoA = N(6)-acetyl-L-lysyl-[histone] + CoA + H(+). The catalysed reaction is L-lysyl-[protein] + acetyl-CoA = N(6)-acetyl-L-lysyl-[protein] + CoA + H(+). The enzyme catalyses succinyl-CoA + L-lysyl-[protein] = N(6)-succinyl-L-lysyl-[protein] + CoA + H(+). It catalyses the reaction glutaryl-CoA + L-lysyl-[protein] = N(6)-glutaryl-L-lysyl-[protein] + CoA + H(+). Its function is as follows. Protein lysine acyltransferase that can act as a acetyltransferase, glutaryltransferasesucc, succinyltransferase or malonyltransferase, depending on the context. Acts as a histone lysine succinyltransferase: catalyzes succinylation of histone H3 on 'Lys-79' (H3K79succ), with a maximum frequency around the transcription start sites of genes. Succinylation of histones gives a specific tag for epigenetic transcription activation. Association with the 2-oxoglutarate dehydrogenase complex, which provides succinyl-CoA, is required for histone succinylation. In different complexes, functions either as an acetyltransferase (HAT) or as a succinyltransferase: in the SAGA and ATAC complexes, acts as a histone acetyltransferase. Has significant histone acetyltransferase activity with core histones, but not with nucleosome core particles. Has a a strong preference for acetylation of H3 at 'Lys-9' (H3K9ac). Acetylation of histones gives a specific tag for epigenetic transcription activation. Also acetylates non-histone proteins, such as tbx5. Involved in heart and limb development by mediating acetylation of tbx5. Together with kat2b, required for growth and differentiation of craniofacial cartilage and bone by regulating acetylation of histone H3 at 'Lys-9' (H3K9ac). Also acts as a histone glutaryltransferase: catalyzes glutarylation of histone H4 on 'Lys-91' (H4K91glu), a mark that destabilizes nucleosomes by promoting dissociation of the H2A-H2B dimers from nucleosomes. The chain is Histone acetyltransferase KAT2A from Danio rerio (Zebrafish).